The following is a 686-amino-acid chain: Acyl-CoA synthetase short-chain family member 3, mitochondrial (686 aa).

The transit peptide at 1–29 directs the protein to the mitochondrion; it reads MKPSWLQCHKVTSAGGLGGPLPGSSPARG. Residue 227–230 coordinates CoA; sequence EPGR. Residues 425–427 and 446–451 contribute to the ATP site; these read GER and DHWWQT. N6-succinyllysine is present on lysine 518. Residue lysine 524 is modified to N6-acetyllysine. ATP is bound by residues aspartate 539, arginine 554, and arginine 565. Residue arginine 624 coordinates CoA.

This sequence belongs to the ATP-dependent AMP-binding enzyme family.

It localises to the mitochondrion matrix. It carries out the reaction acetate + ATP + CoA = acetyl-CoA + AMP + diphosphate. The enzyme catalyses propanoate + ATP + CoA = propanoyl-CoA + AMP + diphosphate. The catalysed reaction is butanoate + ATP + CoA = butanoyl-CoA + AMP + diphosphate. Catalyzes the synthesis of acetyl-CoA from short-chain fatty acids. Propionate is the preferred substrate but can also utilize acetate and butyrate with a much lower affinity. The polypeptide is Acyl-CoA synthetase short-chain family member 3, mitochondrial (ACSS3) (Pongo abelii (Sumatran orangutan)).